The chain runs to 402 residues: Candidapepsin-1 (402 aa).

Residues 1 to 25 constitute a signal peptide (or 18, or 21); the sequence is MVAIVTLTRQVLLTIALALFAQGAA. A propeptide spans 26–62 (activation peptide); sequence IPEEAAKRDDNPGFVALDFDVLRKPLNLTEALLREKR. N-linked (GlcNAc...) asparagine glycosylation is present at asparagine 52. The Peptidase A1 domain occupies 76–389; that stretch reads YASKVSVGSN…NLDANTISIA (314 aa). The active site involves aspartate 94. The cysteines at positions 109 and 115 are disulfide-linked. Aspartate 282 is a catalytic residue. Cysteine 320 and cysteine 354 are joined by a disulfide.

It belongs to the peptidase A1 family. O-glycosylated.

It localises to the secreted. The catalysed reaction is Preferential cleavage at the carboxyl of hydrophobic amino acids, but fails to cleave 15-Leu-|-Tyr-16, 16-Tyr-|-Leu-17 and 24-Phe-|-Phe-25 of insulin B chain. Activates trypsinogen, and degrades keratin.. The protein is Candidapepsin-1 (SAPP1) of Candida parapsilosis (Yeast).